The chain runs to 243 residues: MIIIPAIDLKNGCCVRLEQGLMEKDTVFNDDPGAQAVEWQRQGGEILHIVDLDGAFAGEPKNRSAIEAIVKSVTIPTQLGGGIRDIATIEAYLSLGIGRVIIGTAAQRNPAFVKEACAKFPGKIVVGIDAKNGMVAVQGWAEVTGITATELARQFEGDGVSAIIYTDISRDGMMQGPNIQATKALAEAIKIPVIASGGLSSLQDIENLIAIESSGVTGVITGKAIYSGAINLAEAIALTKKQR.

Aspartate 8 functions as the Proton acceptor in the catalytic mechanism. Aspartate 129 (proton donor) is an active-site residue.

Belongs to the HisA/HisF family.

The protein localises to the cytoplasm. It carries out the reaction 1-(5-phospho-beta-D-ribosyl)-5-[(5-phospho-beta-D-ribosylamino)methylideneamino]imidazole-4-carboxamide = 5-[(5-phospho-1-deoxy-D-ribulos-1-ylimino)methylamino]-1-(5-phospho-beta-D-ribosyl)imidazole-4-carboxamide. The protein operates within amino-acid biosynthesis; L-histidine biosynthesis; L-histidine from 5-phospho-alpha-D-ribose 1-diphosphate: step 4/9. The protein is 1-(5-phosphoribosyl)-5-[(5-phosphoribosylamino)methylideneamino] imidazole-4-carboxamide isomerase of Geobacter sp. (strain M21).